A 182-amino-acid polypeptide reads, in one-letter code: Flagellar transcriptional regulator FlhC (182 aa).

Positions 138, 141, 158, and 161 each coordinate Zn(2+).

It belongs to the FlhC family. As to quaternary structure, heterohexamer composed of two FlhC and four FlhD subunits. Each FlhC binds a FlhD dimer, forming a heterotrimer, and a hexamer assembles by dimerization of two heterotrimers. Zn(2+) is required as a cofactor.

The protein localises to the cytoplasm. Functionally, functions in complex with FlhD as a master transcriptional regulator that regulates transcription of several flagellar and non-flagellar operons by binding to their promoter region. Activates expression of class 2 flagellar genes, including fliA, which is a flagellum-specific sigma factor that turns on the class 3 genes. Also regulates genes whose products function in a variety of physiological pathways. The polypeptide is Flagellar transcriptional regulator FlhC (Gallionella capsiferriformans (strain ES-2) (Gallionella ferruginea capsiferriformans (strain ES-2))).